The primary structure comprises 109 residues: Nucleoid-associated protein NT01EI_1109 (109 aa).

The disordered stretch occupies residues 89-109 (KERMASVSSGMQLPPGFKMPF).

It belongs to the YbaB/EbfC family. In terms of assembly, homodimer.

It is found in the cytoplasm. The protein resides in the nucleoid. Functionally, binds to DNA and alters its conformation. May be involved in regulation of gene expression, nucleoid organization and DNA protection. This chain is Nucleoid-associated protein NT01EI_1109, found in Edwardsiella ictaluri (strain 93-146).